A 490-amino-acid chain; its full sequence is MSDVQVHQLYIHGRYVEATSGKTFNSINPANGEIIATLQQASEQDIEAAVKSAQQGQKIWAAMTAMERSRILRRAVDILRERNDELARLETLDTGKAYSETSTVDIVTGADVLEYYAGLATAIQGEQVPLRESSFFYTRREPLGVVAGIGAWNYPIQIALWKSAPALAAGNAMIFKPSETTPLTALKLAEIYTEAGLPDGVFNVVQGAGREIGQWLTEHPVIEKISFTGGVETGKKVMASAAGSTLKEVTMELGGKSPLIICEDADLNRAADIAVMANFFSSGQVCTNGTRVFVPKSRLADFEKAVVERVKRIRIGDPMAEDTNFGPLTSFPHMEKVLSFIESGKQQGAKVLIGGGRATEGELAKGAYVLPTVFSDCTDQMAIVQEEIFGPVMSILSYETEEEVIQRANDTTFGLAAGVVTQDISRAHRIIHQIEAGICWINTWGESPAEMPVGGYKQSGVGRENGLTTLGHYTRIKSIQVELGDYQSIF.

3 residues coordinate K(+): serine 26, isoleucine 27, and aspartate 93. 150 to 152 contacts NAD(+); sequence GAW. The Charge relay system role is filled by lysine 162. Residues 176–179 and 230–233 each bind NAD(+); these read KPSE and GVET. K(+) is bound at residue leucine 246. Residue glutamate 252 is the Proton acceptor of the active site. The NAD(+) site is built by glycine 254, cysteine 286, and glutamate 387. The Nucleophile role is filled by cysteine 286. Cysteine 286 carries the post-translational modification Cysteine sulfenic acid (-SOH). The K(+) site is built by lysine 457 and glycine 460. Glutamate 464 functions as the Charge relay system in the catalytic mechanism.

This sequence belongs to the aldehyde dehydrogenase family. In terms of assembly, dimer of dimers. Requires K(+) as cofactor.

It catalyses the reaction betaine aldehyde + NAD(+) + H2O = glycine betaine + NADH + 2 H(+). The protein operates within amine and polyamine biosynthesis; betaine biosynthesis via choline pathway; betaine from betaine aldehyde: step 1/1. In terms of biological role, involved in the biosynthesis of the osmoprotectant glycine betaine. Catalyzes the irreversible oxidation of betaine aldehyde to the corresponding acid. The chain is Betaine aldehyde dehydrogenase from Acinetobacter baumannii (strain ACICU).